A 118-amino-acid polypeptide reads, in one-letter code: Small ribosomal subunit protein mS37 (118 aa).

Residues 42-84 (EATCITEMSVMMACWKQNEFRDDACRKEIQGFLDCAARAQEAR) enclose the CHCH domain. 2 short sequence motifs (cx9C motif) span residues 45 to 55 (CITEMSVMMAC) and 66 to 76 (CRKEIQGFLDC). Cystine bridges form between Cys-45/Cys-76 and Cys-55/Cys-66.

Belongs to the mitochondrion-specific ribosomal protein mS37 family. As to quaternary structure, component of the mitochondrial small ribosomal subunit (mt-SSU). Mature mammalian 55S mitochondrial ribosomes consist of a small (28S) and a large (39S) subunit. The 28S small subunit contains a 12S ribosomal RNA (12S mt-rRNA) and 30 different proteins. The 39S large subunit contains a 16S rRNA (16S mt-rRNA), a copy of mitochondrial valine transfer RNA (mt-tRNA(Val)), which plays an integral structural role, and 52 different proteins.

The protein localises to the mitochondrion. The protein resides in the nucleus. This is Small ribosomal subunit protein mS37 (CHCHD1) from Homo sapiens (Human).